A 710-amino-acid chain; its full sequence is Gastrulation-defective protein 3 (710 aa).

A helical transmembrane segment spans residues 597–615 (AYYVFTVLALIISNFPTIV).

The protein localises to the membrane. The chain is Gastrulation-defective protein 3 (gadr-3) from Caenorhabditis elegans.